Reading from the N-terminus, the 278-residue chain is Envelope glycoprotein L (278 aa).

Positions 1–30 (MCRRPDCGFSFSPGPVILLWCCLLLPIVSS) are cleaved as a signal peptide. Residues 43 to 256 (VPAECPELTR…DKYYAGLPPE (214 aa)) form the gL betaherpesvirus-type domain. A disulfide bridge links Cys-154 with Cys-159.

Belongs to the herpesviridae glycoprotein L (gL) family. Betaherpesvirinae gL subfamily. In terms of assembly, interacts with glycoprotein H (gH); this interaction is necessary for the correct processing and cell surface expression of gH. Forms the envelope pentamer complex (PC) composed of gH, gL, UL128, UL130, and UL131A. The pentamer interacts with host NRP2. Forms the envelope trimer complex composed of gH, gL, and gO. The trimer interacts with host PDGFRA. The trimer also interacts with host EPHA2.

The protein resides in the virion membrane. It localises to the host cell membrane. Its subcellular location is the host Golgi apparatus. It is found in the host trans-Golgi network. The heterodimer glycoprotein H-glycoprotein L is required for the fusion of viral and plasma membranes leading to virus entry into the host cell. Acts as a functional inhibitor of gH and maintains gH in an inhibited form. Upon binding to host integrins, gL dissociates from gH leading to activation of the viral fusion glycoproteins gB and gH. In human cytomegalovirus, forms two distincts complexes to mediate viral entry, a trimer and a pentamer at the surface of the virion envelope. The gH-gL-gO trimer is required for infection in fibroblasts by interacting with host PDGFRA, and in glioblastoma cells by interacting with host EPHA2. The gH-gL-UL128-UL130-UL131A pentamer is essential for viral entry in epithelial, endothelial and myeloid cells via interaction with host NRP2. The sequence is that of Envelope glycoprotein L from Homo sapiens (Human).